The following is a 37-amino-acid chain: Brevinin-2DYe (37 aa).

A disulfide bridge links cysteine 31 with cysteine 37.

As to expression, expressed by the skin glands.

The protein resides in the secreted. Its function is as follows. Antimicrobial peptide. Active against the Gram-positive bacterium S.aureus (MIC=15 uM) and the Gram-negative bacterium E.coli (MIC=30 uM). The chain is Brevinin-2DYe from Rana dybowskii (Dybovsky's frog).